The following is a 433-amino-acid chain: Adenylosuccinate synthetase (433 aa).

Residues 13-19 (GDEGKGK) and 41-43 (GHT) each bind GTP. D14 (proton acceptor) is an active-site residue. Mg(2+) is bound by residues D14 and G41. Residues 14–17 (DEGK), 39–42 (NAGH), T130, R144, Q225, T240, and R304 contribute to the IMP site. Catalysis depends on H42, which acts as the Proton donor. Residue 300–306 (STTGRKR) coordinates substrate. GTP contacts are provided by residues R306, 332-334 (KLD), and 414-416 (STG).

The protein belongs to the adenylosuccinate synthetase family. In terms of assembly, homodimer. Mg(2+) serves as cofactor.

It is found in the cytoplasm. The enzyme catalyses IMP + L-aspartate + GTP = N(6)-(1,2-dicarboxyethyl)-AMP + GDP + phosphate + 2 H(+). Its pathway is purine metabolism; AMP biosynthesis via de novo pathway; AMP from IMP: step 1/2. Functionally, plays an important role in the de novo pathway of purine nucleotide biosynthesis. Catalyzes the first committed step in the biosynthesis of AMP from IMP. In Buchnera aphidicola subsp. Acyrthosiphon pisum (strain Tuc7), this protein is Adenylosuccinate synthetase.